A 313-amino-acid chain; its full sequence is Acetaldehyde dehydrogenase (313 aa).

13-16 (SGNI) is an NAD(+) binding site. Cys-133 functions as the Acyl-thioester intermediate in the catalytic mechanism. NAD(+)-binding positions include 164–172 (SAGPGTRAN) and Asn-291.

The protein belongs to the acetaldehyde dehydrogenase family.

The enzyme catalyses acetaldehyde + NAD(+) + CoA = acetyl-CoA + NADH + H(+). The sequence is that of Acetaldehyde dehydrogenase from Cupriavidus pinatubonensis (strain JMP 134 / LMG 1197) (Cupriavidus necator (strain JMP 134)).